The primary structure comprises 130 residues: Small ribosomal subunit protein uS9 (130 aa).

Belongs to the universal ribosomal protein uS9 family.

This Bordetella pertussis (strain Tohama I / ATCC BAA-589 / NCTC 13251) protein is Small ribosomal subunit protein uS9.